Consider the following 599-residue polypeptide: Exocyst complex component EXO70B2 (599 aa).

The segment at 38–58 (GASGNRGGDPRPTPSRGGSNV) is disordered.

Belongs to the EXO70 family. As to quaternary structure, self interacts. Interacts with EXO70B1. Interacts with the exocyst subunits EXO70H1, SEC5A and SEC15B. Binds to SNAP33. Subunit of the exocyst complex that mediates vesicle tethering during exocytosis. Binds to PUB22. Post-translationally, target of the E3 ubiquitin-protein ligase PUB22 that mediates its ubiquitination and degradation via the 26S proteasome to attenuate pathogen-associated molecular patterns (PAMP)-induced signaling, especially is response to the bacterial elicitor flg22. Mostly expressed in leaves and, to a lower extent, in roots, cotyledons, internodes, flower buds, siliques and anthers.

Its subcellular location is the cytoplasmic vesicle. The protein localises to the phagosome. It localises to the cytoplasm. The protein resides in the nucleus. Its function is as follows. Component of an exocyst subcomplex specifically involved in autophagy-related, Golgi-independent membrane traffic to the vacuole. Regulates autophagosome formation and autophagy-related Golgi-independent import into the vacuole. Positive regulator of defense responses to pathogenic bacteria (e.g. P.syringae pv. maculicola), to the biotrophic oomycete H.arabidopsidis and to fungi (e.g. B.graminis hordei), especially in cell wall apposition formation related to plant defense. Required for both immediate and later responses triggered by pathogen-associated molecular patterns (PAMPs). Positive regulator of abscisic acid (ABA)-independent mannitol (drought)-promoted stomatal closure. The sequence is that of Exocyst complex component EXO70B2 from Arabidopsis thaliana (Mouse-ear cress).